The following is a 430-amino-acid chain: MTRSEALFEQAKKTIPGGVNSPVRAFNGVGGSPLFIEKANGAYIYDADGKAYIDYVGSWGPMILGHNHPKIRAAVLAAVENGLSFGAPTELEVQMAEKVISMVPSIEQVRMVSSGTEATMSAIRLARGFTNRDKILKFEGCYHGHADCLLVKAGSGALTLGQPSSPGIPEDFAKHTLTAVYNDLDSVRTLFEQYPTEISCIIIEPVAGNMNCIPPVPGFLQGLRDMCDEFGALLIIDEVMTGFRVSQSGAQGYYGVTPDLTTLGKVIGGGMPVGAFGGRKDVMQFIAPTGPVYQAGTLSGNPIAMSAGLAQMDALCEEGLYEALSAKTKRIAEGFKAAADKHGIPMAINYVGGMFGFFFTEQEQITRFDQVTKCNIEHFRTFYHGMLDEGVYLAPSAYEAGFLSMAHGEEELRLTLEAADRVLASMKTES.

K265 carries the N6-(pyridoxal phosphate)lysine modification.

The protein belongs to the class-III pyridoxal-phosphate-dependent aminotransferase family. HemL subfamily. In terms of assembly, homodimer. Pyridoxal 5'-phosphate serves as cofactor.

It localises to the cytoplasm. It catalyses the reaction (S)-4-amino-5-oxopentanoate = 5-aminolevulinate. It functions in the pathway porphyrin-containing compound metabolism; protoporphyrin-IX biosynthesis; 5-aminolevulinate from L-glutamyl-tRNA(Glu): step 2/2. The chain is Glutamate-1-semialdehyde 2,1-aminomutase from Shewanella putrefaciens (strain CN-32 / ATCC BAA-453).